The sequence spans 94 residues: Scorpine-like-1 (94 aa).

Positions 1–18 (MNTKFTVLIFLGVIVVSY) are cleaved as a signal peptide. The BetaSPN-type CS-alpha/beta domain occupies 54 to 94 (EYGCMMDISWNKDCQRHCQSTEQKDGICHGMKCKCGKPRSY). 3 disulfides stabilise this stretch: Cys-57–Cys-81, Cys-67–Cys-86, and Cys-71–Cys-88.

This sequence belongs to the long chain scorpion toxin family. Class 3 subfamily. As to expression, expressed by the venom gland.

It is found in the secreted. Has antibacterial activity. This chain is Scorpine-like-1, found in Urodacus yaschenkoi (Inland robust scorpion).